Reading from the N-terminus, the 589-residue chain is Mitoguardin 2 (589 aa).

2 consecutive transmembrane segments (helical) span residues I11–G31 and P42–A62. The tract at residues V87–S134 is disordered. 2 stretches are compositionally biased toward low complexity: residues R106–S116 and I123–S134.

Belongs to the mitoguardin family. As to quaternary structure, homodimer and heterodimer; forms heterodimers with miga1.

It localises to the mitochondrion outer membrane. In terms of biological role, regulator of mitochondrial fusion: acts by forming homo- and heterodimers at the mitochondrial outer membrane and facilitating the formation of pld6/MitoPLD dimers. May act by regulating phospholipid metabolism via pld6/MitoPLD. This chain is Mitoguardin 2, found in Xenopus laevis (African clawed frog).